Consider the following 303-residue polypeptide: Oxygen-dependent coproporphyrinogen-III oxidase (303 aa).

Position 93 (S93) interacts with substrate. Positions 97 and 107 each coordinate a divalent metal cation. The active-site Proton donor is H107. Position 109–111 (109–111) interacts with substrate; it reads NVR. Residues H146 and H176 each contribute to the a divalent metal cation site. Residues 241–276 are important for dimerization; that stretch reads YVEFNLVYDRGTLFGLQSGGRTESILMSLPPQVRWG. 259–261 provides a ligand contact to substrate; the sequence is GGR.

The protein belongs to the aerobic coproporphyrinogen-III oxidase family. As to quaternary structure, homodimer. A divalent metal cation serves as cofactor.

Its subcellular location is the cytoplasm. It catalyses the reaction coproporphyrinogen III + O2 + 2 H(+) = protoporphyrinogen IX + 2 CO2 + 2 H2O. It participates in porphyrin-containing compound metabolism; protoporphyrin-IX biosynthesis; protoporphyrinogen-IX from coproporphyrinogen-III (O2 route): step 1/1. Its function is as follows. Involved in the heme biosynthesis. Catalyzes the aerobic oxidative decarboxylation of propionate groups of rings A and B of coproporphyrinogen-III to yield the vinyl groups in protoporphyrinogen-IX. This is Oxygen-dependent coproporphyrinogen-III oxidase from Pseudomonas entomophila (strain L48).